Here is a 110-residue protein sequence, read N- to C-terminus: Ig lambda-1 chain V region S178 (110 aa).

The Ig-like domain maps to 1–106; the sequence is QAVVTQESAL…RWVFGGGTKL (106 aa).

The chain is Ig lambda-1 chain V region S178 from Mus musculus (Mouse).